We begin with the raw amino-acid sequence, 1142 residues long: Envelopment polyprotein (1142 aa).

The signal sequence occupies residues methionine 1–threonine 21. Residues arginine 22–serine 489 lie on the Lumenal side of the membrane. Intrachain disulfides connect cysteine 31/cysteine 156, cysteine 65/cysteine 162, cysteine 114/cysteine 133, cysteine 138/cysteine 143, cysteine 180/cysteine 190, and cysteine 215/cysteine 253. Asparagine 139 carries an N-linked (GlcNAc...) asparagine; by host glycan. Asparagine 353 carries N-linked (GlcNAc...) asparagine; by host glycosylation. 4 cysteine pairs are disulfide-bonded: cysteine 382–cysteine 441, cysteine 386–cysteine 395, cysteine 411–cysteine 430, and cysteine 458–cysteine 481. Asparagine 405 is a glycosylation site (N-linked (GlcNAc...) asparagine; by host). Residues threonine 490 to valine 510 form a helical membrane-spanning segment. Residues serine 511–cysteine 633 lie on the Cytoplasmic side of the membrane. Residues cysteine 522–lysine 539 form a binding to the ribonucleoprotein region. CCHC-type zinc fingers lie at residues cysteine 551–cysteine 571 and cysteine 576–cysteine 597. 3 binding to the ribonucleoprotein regions span residues phenylalanine 594–leucine 611, lysine 598–lysine 609, and lysine 617–serine 631. Residues lysine 617–cysteine 640 enclose the ITAM domain. Residues tyrosine 621–leucine 624 carry the YxxL motif. A helical transmembrane segment spans residues phenylalanine 634–alanine 654. Residues aspartate 655 to asparagine 1110 lie on the Lumenal side of the membrane. 8 disulfides stabilise this stretch: cysteine 741–cysteine 776, cysteine 745–cysteine 783, cysteine 757–cysteine 890, cysteine 771–cysteine 901, cysteine 786–cysteine 909, cysteine 812–cysteine 821, cysteine 829–cysteine 838, and cysteine 869–cysteine 873. Residues tyrosine 763–cysteine 783 form a fusion loop region. Asparagine 933 is a glycosylation site (N-linked (GlcNAc...) asparagine; by host). Cystine bridges form between cysteine 975–cysteine 1005, cysteine 998–cysteine 1050, cysteine 1015–cysteine 1020, cysteine 1051–cysteine 1056, and cysteine 1090–cysteine 1094. The helical transmembrane segment at tryptophan 1111 to cysteine 1131 threads the bilayer. The segment at leucine 1127–serine 1142 is binding to the ribonucleoprotein. Over cysteine 1132 to serine 1142 the chain is Cytoplasmic.

The protein belongs to the hantavirus envelope glycoprotein family. Homodimer. Homotetramer; forms heterotetrameric Gn-Gc spikes in the pre-fusion conformation. Interacts (via C-terminus) with the nucleoprotein. Interacts with host TUFM; this interaction contributes to the virus-induced degradation of mitochondria by autophagy, which leads to degradation of host MAVS and inhibition of type I interferon (IFN) responses. Interacts with host MAP1LC3B; this interaction contributes to the virus-induced degradation of mitochondria by autophagy, which leads to degradation of host MAVS and inhibition of type I interferon (IFN) responses. As to quaternary structure, homodimer. Homotetramer; forms heterotetrameric Gn-Gc spikes in the pre-fusion conformation. Homotrimer; forms homotrimer in the post-fusion conformation at acidic pH. Interacts (via C-terminus) with the nucleoprotein. In terms of processing, envelope polyprotein precursor is quickly cleaved in vivo just after synthesis, presumably by host signal peptidase.

Its subcellular location is the virion membrane. It localises to the host cell surface. The protein resides in the host Golgi apparatus membrane. It is found in the host endoplasmic reticulum membrane. The protein localises to the host mitochondrion. Its function is as follows. Forms homotetramers with glycoprotein C at the surface of the virion. Attaches the virion to host cell receptors including integrin alpha5/ITGB1. This attachment induces virion internalization predominantly through clathrin-dependent endocytosis. Mediates the assembly and budding of infectious virus particles through its interaction with the nucleocapsid protein and the viral genome. May dysregulate normal immune and endothelial cell responses through an ITAM motif. Translocates to mitochondria, binds to host TUFM and recruits MAP1LC3B. These interactions induce mitochondrial autophagy and therefore destruction of host MAVS leading to inhibition of type I interferon (IFN) responses. Concomitant breakdown of glycoprotein N is apparently prevented by the nucleoprotein that may inhibit Gn-stimulated autophagosome-lysosome fusion. Interacts with the viral genomic RNA. Forms homotetramers with glycoprotein N at the surface of the virion. Attaches the virion to host cell receptors including integrin ITGAV/ITGB3. This attachment induces virion internalization predominantly through clathrin-dependent endocytosis. Class II fusion protein that promotes fusion of viral membrane with host endosomal membrane after endocytosis of the virion. The chain is Envelopment polyprotein (GP) from Microtus pennsylvanicus (Meadow vole).